The chain runs to 1377 residues: Protein RhsA (1377 aa).

28 repeat units span residues 330–352 (GKQV…HRHT), 353–374 (GRPE…LNPA), 375–417 (GLSY…EHAD), 418–438 (GSVT…TDAA), 439–460 (GRTT…TTPD), 461–481 (GRAS…TGPD), 482–502 (GLEL…TAPD), 503–525 (GDIT…EDAT), 526–546 (GSRK…TDCS), 547–567 (GYVT…HREE), 568–588 (GLSQ…KDTQ), 589–609 (GHET…IAPD), 610–629 (GSRN…TTQG), 630–650 (GLTR…TSEN), 651–671 (GSHT…TGFD), 672–691 (GRTQ…SEDE), 692–711 (GLVT…RTVK), 712–734 (GETA…HISE), 735–758 (GHRV…QTVH), 808–828 (GDTP…LRSF), 829–850 (GRYE…HLNS), 851–871 (LLSD…ISSP), 872–894 (RQTR…TAAN), 895–930 (LDIR…NRIA), 931–959 (RDAH…VIRT), 960–984 (DDER…TQYE), 985–1019 (EPLV…MSLS), and 1162–1186 (GTTE…HQLQ). Residues 330-1186 (GKQVRSFTYD…LNEENPHQLQ (857 aa)) form a 28 X approximate tandem repeats region. The segment at 1356 to 1377 (DAKSTQKAWNCRHSRQSNDKKR) is disordered.

Belongs to the RHS family.

Rhs elements have a nonessential function. They may play an important role in the natural ecology of the cell. This is Protein RhsA (rhsA) from Escherichia coli (strain K12).